Here is a 301-residue protein sequence, read N- to C-terminus: Ornithine carbamoyltransferase (301 aa).

Residues 47-50 (STRT), Gln-74, Arg-98, and 125-128 (HPCQ) contribute to the carbamoyl phosphate site. L-ornithine is bound by residues Asn-156, Asp-220, and 224-225 (SM). Carbamoyl phosphate contacts are provided by residues 260–261 (CL) and Arg-288.

It belongs to the aspartate/ornithine carbamoyltransferase superfamily. OTCase family.

Its subcellular location is the cytoplasm. It catalyses the reaction carbamoyl phosphate + L-ornithine = L-citrulline + phosphate + H(+). The protein operates within amino-acid biosynthesis; L-arginine biosynthesis; L-arginine from L-ornithine and carbamoyl phosphate: step 1/3. Its function is as follows. Reversibly catalyzes the transfer of the carbamoyl group from carbamoyl phosphate (CP) to the N(epsilon) atom of ornithine (ORN) to produce L-citrulline. The sequence is that of Ornithine carbamoyltransferase from Methanobrevibacter smithii (strain ATCC 35061 / DSM 861 / OCM 144 / PS).